The primary structure comprises 269 residues: Nitrogen regulatory protein DAL80 (269 aa).

A GATA-type zinc finger spans residues 31-55 (CQNCFTVKTPLWRRDEHGTVLCNAC).

It localises to the nucleus. Negative regulator of multiple nitrogen catabolic genes including the allantoin pathway genes. This is Nitrogen regulatory protein DAL80 (DAL80) from Saccharomyces cerevisiae (strain ATCC 204508 / S288c) (Baker's yeast).